The chain runs to 513 residues: Dye-decolorizing peroxidase msp1 (513 aa).

A signal peptide spans 1–20 (MKLFSASVFAAIIASHYASA). A propeptide spanning residues 21–55 (TAHIRAPNVKPRRTNSLLTAPPQQPPLPSAQQAAS) is cleaved from the precursor. Residues 33-52 (RTNSLLTAPPQQPPLPSAQQ) are disordered. The active-site Proton acceptor is the aspartate 228. Histidine 365 is a heme binding site.

As to quaternary structure, homodimer. Heme b serves as cofactor.

The protein resides in the secreted. It carries out the reaction Reactive Blue 5 + 2 H2O2 = 2,2'-disulfonyl azobenzene + 3-[(4-amino-6-chloro-1,3,5-triazin-2-yl)amino]benzenesulfonate + phthalate + 2 H2O + 2 H(+). The enzyme catalyses 2 a phenolic donor + H2O2 = 2 a phenolic radical donor + 2 H2O. Functionally, manganese-independent peroxidase that is able to convert a large number of compounds, but its physiological substrate is not known. In addition to classic peroxidase substrates (e.g. 2,6-dimethoxyphenol), oxidizes dyes such as Reactive Blue 5. Also degrades beta-carotene. The chain is Dye-decolorizing peroxidase msp1 from Mycetinis scorodonius (Garlic mushroom).